The sequence spans 118 residues: Small ribosomal subunit protein uS13 (118 aa).

Residues 94–118 (SLPLRGQRTKTNARTRKGPRKPIRK) are disordered.

This sequence belongs to the universal ribosomal protein uS13 family. Part of the 30S ribosomal subunit. Forms a loose heterodimer with protein S19. Forms two bridges to the 50S subunit in the 70S ribosome.

Functionally, located at the top of the head of the 30S subunit, it contacts several helices of the 16S rRNA. In the 70S ribosome it contacts the 23S rRNA (bridge B1a) and protein L5 of the 50S subunit (bridge B1b), connecting the 2 subunits; these bridges are implicated in subunit movement. Contacts the tRNAs in the A and P-sites. The polypeptide is Small ribosomal subunit protein uS13 (Shewanella baltica (strain OS223)).